We begin with the raw amino-acid sequence, 663 residues long: Probable peptidyl-glycine alpha-amidating monooxygenase pamn-1 (663 aa).

Residues 1–21 form the signal peptide; the sequence is MNDRISINLIYLVLTFCCVSA. The tract at residues 1-300 is peptidylglycine alpha-hydroxylating monooxygenase; sequence MNDRISINLI…YDAKLDNPYP (300 aa). Residues His75 and His76 each coordinate Cu(2+). An intrachain disulfide couples Cys82 to Cys98. A Cu(2+)-binding site is contributed by His142. Asn191 carries an N-linked (GlcNAc...) asparagine glycan. Disulfide bonds link Cys194-Cys305 and Cys261-Cys283. 2 residues coordinate Cu(2+): His210 and His212. Residue Asn269 is glycosylated (N-linked (GlcNAc...) asparagine). Met282 is a binding site for Cu(2+). Positions 301–663 are peptidyl-alpha-hydroxyglycine alpha-amidating lyase; that stretch reads QGAICAKDYP…WQFKIRHDQN (363 aa). An a protein-binding site is contributed by Arg376. N-linked (GlcNAc...) asparagine glycosylation occurs at Asn411. NHL repeat units lie at residues 411–454, 464–507, 511–554, and 626–656; these read NQTK…WKIE, SGEL…LDLN, IRQF…MTTQ, and FGQP…LWQF. A disulfide bridge connects residues Cys478 and Cys497. A protein is bound by residues Tyr496 and Arg543.

It in the C-terminal section; belongs to the peptidyl-alpha-hydroxyglycine alpha-amidating lyase family. In the N-terminal section; belongs to the copper type II ascorbate-dependent monooxygenase family. As to quaternary structure, monomer. Zn(2+) serves as cofactor. Requires Cu(2+) as cofactor.

The protein localises to the secreted. The catalysed reaction is a [peptide]-C-terminal glycine + 2 L-ascorbate + O2 = a [peptide]-C-terminal (2S)-2-hydroxyglycine + 2 monodehydro-L-ascorbate radical + H2O. It catalyses the reaction a [peptide]-C-terminal (2S)-2-hydroxyglycine = a [peptide]-C-terminal amide + glyoxylate. In terms of biological role, probable bifunctional enzyme that catalyzes 2 sequential steps in C-terminal alpha-amidation of peptides. The monooxygenase part produces an unstable peptidyl(2-hydroxyglycine) intermediate that is dismutated to glyoxylate and the corresponding desglycine peptide amide by the lyase part. C-terminal amidation of peptides such as neuropeptides is essential for full biological activity. This chain is Probable peptidyl-glycine alpha-amidating monooxygenase pamn-1, found in Caenorhabditis elegans.